Reading from the N-terminus, the 428-residue chain is MTLMEDAKKGIVTPSIETVAKTEGIDPETVCSCVAKGLIAIPVNNRRETLPIGIGKYMSTKINANVGTSRDYVDIDAEIKKAKAAEAFGAHAVMDLSTGGNLDEIRTRILKSVNIPVGTVPIYQAAASRKVVVEMTSDDMFNAVRKHAEQGVDFVTVHAGVNLNSLERLRQSDRIMNVVSRGGSFTLAWMLHNGEDNPFYAEFDYLLEIAKEYDMTLSLGDGMRPGCIADASDRPKFMEFITLGELVKRARAANVQTFVEGPGHVPLNEIELSVRGMKELCNGAPLYLLGPLVTDIAPGFDHITGAIGGAVAGMHGTDFLCMVTPSEHLALPTLEDIKEGLLVTKVAAHTIDLIKEGPRERAWEKDLAMAYARRDLDWEKQFELAIDGNRARKIRDARKTESDTCSMCGELCALKIVKEAFEKKNSEE.

Residues asparagine 65, methionine 94, tyrosine 123, histidine 158, 180 to 182 (SRG), 221 to 224 (DGMR), and glutamate 260 contribute to the substrate site. Residue histidine 264 coordinates Zn(2+). Residue tyrosine 287 coordinates substrate. Residue histidine 328 participates in Zn(2+) binding. 3 residues coordinate [4Fe-4S] cluster: cysteine 405, cysteine 408, and cysteine 412.

The protein belongs to the ThiC family. [4Fe-4S] cluster is required as a cofactor.

The enzyme catalyses 5-amino-1-(5-phospho-beta-D-ribosyl)imidazole + S-adenosyl-L-methionine = 4-amino-2-methyl-5-(phosphooxymethyl)pyrimidine + CO + 5'-deoxyadenosine + formate + L-methionine + 3 H(+). Its pathway is cofactor biosynthesis; thiamine diphosphate biosynthesis. Its function is as follows. Catalyzes the synthesis of the hydroxymethylpyrimidine phosphate (HMP-P) moiety of thiamine from aminoimidazole ribotide (AIR) in a radical S-adenosyl-L-methionine (SAM)-dependent reaction. The protein is Phosphomethylpyrimidine synthase 2 of Methanosarcina barkeri (strain Fusaro / DSM 804).